Here is a 611-residue protein sequence, read N- to C-terminus: Dihydroxy-acid dehydratase (611 aa).

Aspartate 81 provides a ligand contact to Mg(2+). [2Fe-2S] cluster is bound at residue cysteine 122. Residues aspartate 123 and lysine 124 each coordinate Mg(2+). Lysine 124 bears the N6-carboxylysine mark. Cysteine 195 serves as a coordination point for [2Fe-2S] cluster. Mg(2+) is bound at residue glutamate 491. The active-site Proton acceptor is serine 517.

Belongs to the IlvD/Edd family. Homodimer. [2Fe-2S] cluster serves as cofactor. It depends on Mg(2+) as a cofactor.

It catalyses the reaction (2R)-2,3-dihydroxy-3-methylbutanoate = 3-methyl-2-oxobutanoate + H2O. The enzyme catalyses (2R,3R)-2,3-dihydroxy-3-methylpentanoate = (S)-3-methyl-2-oxopentanoate + H2O. Its pathway is amino-acid biosynthesis; L-isoleucine biosynthesis; L-isoleucine from 2-oxobutanoate: step 3/4. It functions in the pathway amino-acid biosynthesis; L-valine biosynthesis; L-valine from pyruvate: step 3/4. Its function is as follows. Functions in the biosynthesis of branched-chain amino acids. Catalyzes the dehydration of (2R,3R)-2,3-dihydroxy-3-methylpentanoate (2,3-dihydroxy-3-methylvalerate) into 2-oxo-3-methylpentanoate (2-oxo-3-methylvalerate) and of (2R)-2,3-dihydroxy-3-methylbutanoate (2,3-dihydroxyisovalerate) into 2-oxo-3-methylbutanoate (2-oxoisovalerate), the penultimate precursor to L-isoleucine and L-valine, respectively. This is Dihydroxy-acid dehydratase from Pasteurella multocida (strain Pm70).